The following is a 280-amino-acid chain: Dopamine receptor-interacting protein 1 (280 aa).

Interacts with DRD1, the dopamine D1 receptor.

Could be a regulator of the dopamine receptor signaling pathway. In Bos taurus (Bovine), this protein is Dopamine receptor-interacting protein 1 (DORIP1).